A 307-amino-acid polypeptide reads, in one-letter code: Zinc transporter ZIP9 (307 aa).

Residues Phe-4–Ile-24 traverse the membrane as a helical segment. Asn-29 is a glycosylation site (N-linked (GlcNAc...) asparagine). 5 consecutive transmembrane segments (helical) span residues Leu-35–Val-55, Ala-106–Gly-126, Ile-146–Ala-166, Leu-176–Phe-196, and His-210–Ser-230. N-linked (GlcNAc...) asparagine glycosylation occurs at Asn-241. Transmembrane regions (helical) follow at residues Gly-244–Pro-264 and Leu-286–Gln-306.

The protein belongs to the ZIP transporter (TC 2.A.5) family. Highly expressed in pancreas, testis, and pituitary and moderately in the kidney, liver, uterus, heart, prostate, and brain, whereas expression is lower in the ovary and colon.

The protein localises to the golgi apparatus. Its subcellular location is the trans-Golgi network membrane. It is found in the cell membrane. It localises to the cytoplasm. The protein resides in the perinuclear region. The protein localises to the mitochondrion. Its subcellular location is the nucleus. The enzyme catalyses Zn(2+)(in) = Zn(2+)(out). Its function is as follows. Transports zinc ions across cell and organelle membranes into the cytoplasm and regulates intracellular zinc homeostasis. Participates in the zinc ions efflux out of the secretory compartments. Regulates intracellular zinc level, resulting in the enhancement of AKT1 and MAPK3/MAPK1 (Erk1/2) phosphorylation in response to the BCR activation. Also functions as a membrane androgen receptor that mediates, through a G protein, the non-classical androgen signaling pathway, characterized by the activation of MAPK3/MAPK1 (Erk1/2) and transcription factors CREB1 or ATF1. This pathway contributes to CLDN1 and CLDN5 expression and tight junction formation between adjacent Sertoli cells. Mediates androgen-induced vascular endothelial cell proliferation through activation of an inhibitory G protein leading to the AKT1 and MAPK3/MAPK1 (Erk1/2) activation which in turn modulate inhibition (phosphorylation) of GSK3B and CCND1 transcription. Moreover, has dual functions as a membrane-bound androgen receptor and as an androgen-dependent zinc transporter both of which are mediated through an inhibitory G protein (Gi) that mediates both MAP kinase and zinc signaling leading to the androgen-dependent apoptotic process. The chain is Zinc transporter ZIP9 from Homo sapiens (Human).